Consider the following 743-residue polypeptide: MAEVDFGDTELFEQLDGDLPASSVHVRFDSEGEANDVQELVSQHEETINRLSAENQELKRRLSLLNRPSGLPVEDKLDGPLLQILFMNHIISKQYHQEIEEFITSLFQKYEEHRKSNSEKTSFNIKPQPSSILLEENDDSDADTMKNIKQAFSVVGSVQYFKNFCLDKLGQPLLNENPQLTEGWDIPKYQQVFTQIVSLDGQEIQVKAKRPKPCCFNCGSEEHQMRDCPKPRDQAHINMKRKEFLDACGEAGNQNQQRYHAEEVEERFGKYKPGVISEELQEALGIMDKNLPPFIYRMRELGYPPGWLKEAELENSGLSLYDGKERLDASDGEIEDRDTEAKKHVSYDVSKLVNYPGFNISAPPDMFDEWQMFGSIPMQQAHQKDIFANYLTDSFPPGSSNKSNKRSSCQSSSSERKRQKTSGNHTVTSAVMDMDMESDEDMYHSRASKGYMFHPPLPPGSPSYGTPPPLPRGTPPSTPPNFIPPPPPTPTPPPLPKGTPPPTPNRDSPKVPPQVLDEDTWTLEELEEKQRLLWAQLDNGESTNSDCDAHTPITVSSVTSSPSRTELDIATGRKAAPRQTAHELKSPCVITKLFVAEPEEGGPLIPEEGGPLIPEEGGPLIPEEGGPLIPEEGGPLIPEEDSETNEDSNECYVVEGNDIEVNKLSSKHENASEKNPSDEDATEEAACVEPSPKRSGVPDVSKFAEGITPFEYDNMSDSTGVYLRLRGLLKNSPRNVQKSKKQV.

Residues 29 to 67 (DSEGEANDVQELVSQHEETINRLSAENQELKRRLSLLNR) adopt a coiled-coil conformation. The CCHC-type zinc finger occupies 213–230 (PCCFNCGSEEHQMRDCPK). 5 disordered regions span residues 390–432 (YLTD…SAVM), 449–518 (KGYM…VLDE), 540–566 (GESTNSDCDAHTPITVSSVTSSPSRTE), 600–649 (EGGP…EDSN), and 662–700 (NKLSSKHENASEKNPSDEDATEEAACVEPSPKRSGVPDV). The segment covering 399-413 (SSNKSNKRSSCQSSS) has biased composition (low complexity). A compositionally biased stretch (pro residues) spans 455-504 (PPLPPGSPSYGTPPPLPRGTPPSTPPNFIPPPPPTPTPPPLPKGTPPPTP). 2 stretches are compositionally biased toward low complexity: residues 551–564 (TPITVSSVTSSPSR) and 601–637 (GGPLIPEEGGPLIPEEGGPLIPEEGGPLIPEEGGPLI). Over residues 638 to 649 (PEEDSETNEDSN) the composition is skewed to acidic residues. Residues 666 to 677 (SKHENASEKNPS) show a composition bias toward basic and acidic residues.

Belongs to the ZCCHC8 family.

It is found in the nucleus. Its subcellular location is the nucleoplasm. In terms of biological role, scaffolding subunit of the trimeric nuclear exosome targeting (NEXT) complex that is involved in the surveillance and turnover of aberrant transcripts and non-coding RNAs. NEXT functions as an RNA exosome cofactor that directs a subset of non-coding short-lived RNAs for exosomal degradation. May be involved in pre-mRNA splicing. It is required for 3'-end maturation of telomerase RNA component (TERC), TERC 3'-end targeting to the nuclear RNA exosome, and for telomerase function. The protein is Zinc finger CCHC domain-containing protein 8 (zcchc8) of Xenopus laevis (African clawed frog).